Here is a 405-residue protein sequence, read N- to C-terminus: Argininosuccinate synthase (405 aa).

Residues 10–18 and A37 each bind ATP; that span reads AYSGGLDTS. Positions 88 and 93 each coordinate L-citrulline. G118 is a binding site for ATP. 3 residues coordinate L-aspartate: T120, N124, and D125. N124 is an L-citrulline binding site. The L-citrulline site is built by R128, S179, S188, E264, and Y276.

This sequence belongs to the argininosuccinate synthase family. Type 1 subfamily. In terms of assembly, homotetramer.

Its subcellular location is the cytoplasm. The enzyme catalyses L-citrulline + L-aspartate + ATP = 2-(N(omega)-L-arginino)succinate + AMP + diphosphate + H(+). The protein operates within amino-acid biosynthesis; L-arginine biosynthesis; L-arginine from L-ornithine and carbamoyl phosphate: step 2/3. This chain is Argininosuccinate synthase, found in Pseudomonas putida (strain GB-1).